We begin with the raw amino-acid sequence, 275 residues long: Light-independent protochlorophyllide reductase iron-sulfur ATP-binding protein (275 aa).

ATP is bound by residues 12 to 17 and Lys-41; that span reads GIGKST. Mg(2+) is bound at residue Ser-16. Residues Cys-97 and Cys-131 each contribute to the [4Fe-4S] cluster site. 182–183 contacts ATP; the sequence is NR.

It belongs to the NifH/BchL/ChlL family. Homodimer. Protochlorophyllide reductase is composed of three subunits; BchL, BchN and BchB. [4Fe-4S] cluster is required as a cofactor.

It catalyses the reaction chlorophyllide a + oxidized 2[4Fe-4S]-[ferredoxin] + 2 ADP + 2 phosphate = protochlorophyllide a + reduced 2[4Fe-4S]-[ferredoxin] + 2 ATP + 2 H2O. The protein operates within porphyrin-containing compound metabolism; bacteriochlorophyll biosynthesis (light-independent). Its function is as follows. Component of the dark-operative protochlorophyllide reductase (DPOR) that uses Mg-ATP and reduced ferredoxin to reduce ring D of protochlorophyllide (Pchlide) to form chlorophyllide a (Chlide). This reaction is light-independent. The L component serves as a unique electron donor to the NB-component of the complex, and binds Mg-ATP. In Prosthecochloris aestuarii (strain DSM 271 / SK 413), this protein is Light-independent protochlorophyllide reductase iron-sulfur ATP-binding protein.